A 393-amino-acid chain; its full sequence is MTKLSRRVLEMEESVTLATSARAKTLKAQGRDVLELSLGQPDFVTPKNIQEAAMKSIRDGRASFYTIASGLPELKDAISQYFEKFYGYSVERKQIVVGTGAKFILYALFAAVINPKDEVIIPTPFWVSYADQIKMNDGVPVFIRTSEENHFKATVEQLEAARTNKTKMIVLNSPSNPTGMIYSKKELEAIGNWAVKHDILILSDDIYGRLVYNGARFTPISTISQPICQQTIVINGVSKTYSMTGWRVGYAVGDPEIIGAMSKIVSQTTSNLTTAAQYAAIEALIGNQDTVEVMRQAFEERLNTIYPLLAKVPGFHVVKPEGAFYFFPNVKKAMEMKGYTDVTEFTTALLEETGVALVTGAGFGAPENVRLSYATDMVTLKEAINRIQAFMEK.

3 residues coordinate L-asparagine: G39, W126, and N176. An N6-(pyridoxal phosphate)lysine modification is found at K239. An L-asparagine-binding site is contributed by R370.

Belongs to the class-I pyridoxal-phosphate-dependent aminotransferase family. Requires pyridoxal 5'-phosphate as cofactor.

The catalysed reaction is a 2-oxocarboxylate + L-asparagine = 2-oxosuccinamate + an L-alpha-amino acid. It carries out the reaction L-asparagine + 2-oxoglutarate = 2-oxosuccinamate + L-glutamate. In terms of biological role, catalyzes the transamination reaction between L-asparagine and 2-oxoglutarate to produce L-glutamate and 2-oxosuccinamate. Is not active with pyruvate as amine acceptor. May also use other amino acids as substrates. The sequence is that of Asparagine--oxo-acid transaminase from Streptococcus mutans serotype c (strain ATCC 700610 / UA159).